A 210-amino-acid polypeptide reads, in one-letter code: Prolactin (210 aa).

The N-terminal stretch at methionine 1–glycine 23 is a signal peptide. Disulfide bonds link cysteine 69–cysteine 183 and cysteine 200–cysteine 210.

Belongs to the somatotropin/prolactin family. Pituitary gland.

It is found in the secreted. The sequence is that of Prolactin (prl) from Hypophthalmichthys nobilis (Bighead carp).